The sequence spans 308 residues: Glycine--tRNA ligase alpha subunit (308 aa).

It belongs to the class-II aminoacyl-tRNA synthetase family. In terms of assembly, tetramer of two alpha and two beta subunits.

The protein resides in the cytoplasm. It carries out the reaction tRNA(Gly) + glycine + ATP = glycyl-tRNA(Gly) + AMP + diphosphate. The chain is Glycine--tRNA ligase alpha subunit from Brucella abortus (strain 2308).